A 363-amino-acid polypeptide reads, in one-letter code: DNA replication and repair protein RecF (363 aa).

Position 31–38 (31–38) interacts with ATP; that stretch reads GANSSGKT.

This sequence belongs to the RecF family.

It localises to the cytoplasm. Its function is as follows. The RecF protein is involved in DNA metabolism; it is required for DNA replication and normal SOS inducibility. RecF binds preferentially to single-stranded, linear DNA. It also seems to bind ATP. In Nitrosococcus oceani (strain ATCC 19707 / BCRC 17464 / JCM 30415 / NCIMB 11848 / C-107), this protein is DNA replication and repair protein RecF.